The sequence spans 381 residues: Arrestin homolog (381 aa).

The protein belongs to the arrestin family.

The polypeptide is Arrestin homolog (Heliothis virescens (Tobacco budworm moth)).